Reading from the N-terminus, the 162-residue chain is uncharacterized protein (162 aa).

A PUA domain is found at 78-154 (KNLVVVDIGA…KAIKNLHYVG (77 aa)).

This is an uncharacterized protein from Methanocaldococcus jannaschii (strain ATCC 43067 / DSM 2661 / JAL-1 / JCM 10045 / NBRC 100440) (Methanococcus jannaschii).